The sequence spans 114 residues: Small ribosomal subunit protein uS13m (114 aa).

The tract at residues 92 to 114 (DGLPLRGQRSHTNARTSRKRIRK) is disordered.

It belongs to the universal ribosomal protein uS13 family. In terms of assembly, part of the small ribosomal subunit.

It localises to the mitochondrion. In terms of biological role, located at the top of the head of the small subunit, it contacts several helices of the 18S rRNA. This is Small ribosomal subunit protein uS13m (RPS13) from Oenothera berteroana (Bertero's evening primrose).